We begin with the raw amino-acid sequence, 573 residues long: Potassium-transporting ATPase potassium-binding subunit (573 aa).

10 consecutive transmembrane segments (helical) span residues 6 to 26, 66 to 86, 135 to 155, 177 to 197, 257 to 277, 283 to 303, 382 to 402, 428 to 448, 493 to 513, and 537 to 557; these read ILFA…GSYI, FFSL…ILLL, ALAV…IALI, VFWI…FQGV, IQMV…GKWV, GWLI…VMTI, IFGG…LAVF, MFAL…AAVI, ITIA…VIML, and FIFA…TIFP.

The protein belongs to the KdpA family. As to quaternary structure, the system is composed of three essential subunits: KdpA, KdpB and KdpC.

Its subcellular location is the cell inner membrane. Its function is as follows. Part of the high-affinity ATP-driven potassium transport (or Kdp) system, which catalyzes the hydrolysis of ATP coupled with the electrogenic transport of potassium into the cytoplasm. This subunit binds the periplasmic potassium ions and delivers the ions to the membrane domain of KdpB through an intramembrane tunnel. The chain is Potassium-transporting ATPase potassium-binding subunit from Francisella tularensis subsp. holarctica (strain FTNF002-00 / FTA).